The primary structure comprises 94 residues: Pyrimidine/purine nucleoside phosphorylase 2 (94 aa).

It belongs to the nucleoside phosphorylase PpnP family.

The catalysed reaction is a purine D-ribonucleoside + phosphate = a purine nucleobase + alpha-D-ribose 1-phosphate. The enzyme catalyses adenosine + phosphate = alpha-D-ribose 1-phosphate + adenine. It carries out the reaction cytidine + phosphate = cytosine + alpha-D-ribose 1-phosphate. It catalyses the reaction guanosine + phosphate = alpha-D-ribose 1-phosphate + guanine. The catalysed reaction is inosine + phosphate = alpha-D-ribose 1-phosphate + hypoxanthine. The enzyme catalyses thymidine + phosphate = 2-deoxy-alpha-D-ribose 1-phosphate + thymine. It carries out the reaction uridine + phosphate = alpha-D-ribose 1-phosphate + uracil. It catalyses the reaction xanthosine + phosphate = alpha-D-ribose 1-phosphate + xanthine. Its function is as follows. Catalyzes the phosphorolysis of diverse nucleosides, yielding D-ribose 1-phosphate and the respective free bases. Can use uridine, adenosine, guanosine, cytidine, thymidine, inosine and xanthosine as substrates. Also catalyzes the reverse reactions. This chain is Pyrimidine/purine nucleoside phosphorylase 2, found in Psychrobacter cryohalolentis (strain ATCC BAA-1226 / DSM 17306 / VKM B-2378 / K5).